We begin with the raw amino-acid sequence, 526 residues long: Fumitremorgin C synthase (526 aa).

The chain crosses the membrane as a helical span at residues 4-24 (LPLSPAVLFLIIVLPILYLWI). C443 provides a ligand contact to heme.

This sequence belongs to the cytochrome P450 family. The cofactor is heme.

The protein resides in the membrane. The enzyme catalyses tryprostatin A + reduced [NADPH--hemoprotein reductase] + O2 = fumitremorgin C + oxidized [NADPH--hemoprotein reductase] + 2 H2O + H(+). Its pathway is mycotoxin biosynthesis. Its function is as follows. Cytochrome P450 monooxygenase; part of the gene cluster that mediates the biosynthesis of fumitremorgins, indole alkaloids that carry not only intriguing chemical structures, but also interesting biological and pharmacological activities. The biosynthesis of fumitremorgin-type alkaloids begins by condensation of the two amino acids L-tryptophan and L-proline to brevianamide F, catalyzed by the non-ribosomal peptide synthetase ftmA. Brevianamide F is then prenylated by the prenyltransferase ftmPT1/ftmB in the presence of dimethylallyl diphosphate, resulting in the formation of tryprostatin B. The three cytochrome P450 monooxygenases, ftmP450-1/ftmC, ftmP450-2/ftmE and ftmP450-3/FtmG, are responsible for the conversion of tryprostatin B to 6-hydroxytryprostatin B, tryprostatin A to fumitremorgin C and fumitremorgin C to 12,13-dihydroxyfumitremorgin C, respectively. The putative methyltransferase ftmMT/ftmD is expected for the conversion of 6-hydroxytryprostatin B to tryprostatin A. FtmPT2/FtmH catalyzes the prenylation of 12,13-dihydroxyfumitre-morgin C in the presence of dimethylallyl diphosphate, resulting in the formation of fumitremorgin B. Fumitremorgin B is further converted to verruculogen by ftmOx1/ftmF via the insertion of an endoperoxide bond between the two prenyl moieties. In some fungal species, verruculogen is further converted to fumitremorgin A, but the enzymes involved in this step have not been identified yet. The protein is Fumitremorgin C synthase of Aspergillus fumigatus (Neosartorya fumigata).